The chain runs to 452 residues: 23S rRNA (uracil(1939)-C(5))-methyltransferase RlmD (452 aa).

A disordered region spans residues 1–23; that stretch reads MSRKKSNGGLRFQPAGGNRATQI. Residues 22-80 enclose the TRAM domain; sequence QIPVGKKQRLLIERVAGDGRGIAFIEGRTWFVSGALGGEEVEARVLGARGKVVEARLER. Residues C93, C99, C102, and C181 each coordinate [4Fe-4S] cluster. Positions 285, 314, 319, 335, 362, and 383 each coordinate S-adenosyl-L-methionine. The Nucleophile role is filled by C409.

The protein belongs to the class I-like SAM-binding methyltransferase superfamily. RNA M5U methyltransferase family. RlmD subfamily.

It catalyses the reaction uridine(1939) in 23S rRNA + S-adenosyl-L-methionine = 5-methyluridine(1939) in 23S rRNA + S-adenosyl-L-homocysteine + H(+). Catalyzes the formation of 5-methyl-uridine at position 1939 (m5U1939) in 23S rRNA. In Pseudomonas entomophila (strain L48), this protein is 23S rRNA (uracil(1939)-C(5))-methyltransferase RlmD.